A 247-amino-acid chain; its full sequence is tRNA (guanine-N(7)-)-methyltransferase (247 aa).

Residues glycine 70, 93–94 (EI), 128–129 (NA), and leucine 148 each bind S-adenosyl-L-methionine. Aspartate 151 is a catalytic residue. Position 226–228 (226–228 (SEE)) interacts with S-adenosyl-L-methionine.

Belongs to the class I-like SAM-binding methyltransferase superfamily. TrmB family.

It localises to the nucleus. It catalyses the reaction guanosine(46) in tRNA + S-adenosyl-L-methionine = N(7)-methylguanosine(46) in tRNA + S-adenosyl-L-homocysteine. Its pathway is tRNA modification; N(7)-methylguanine-tRNA biosynthesis. Functionally, catalyzes the formation of N(7)-methylguanine at position 46 (m7G46) in tRNA. This is tRNA (guanine-N(7)-)-methyltransferase from Drosophila pseudoobscura pseudoobscura (Fruit fly).